A 455-amino-acid polypeptide reads, in one-letter code: Ectonucleoside triphosphate diphosphohydrolase 6 (455 aa).

The Cytoplasmic segment spans residues 1–12 (MRKIPNHGTLRM). The chain crosses the membrane as a helical span at residues 13-32 (TKVAYPLGLCVGLFIYVAYI). Topologically, residues 33-455 (KWHRASAAQA…SLKRQKVPAL (423 aa)) are lumenal. The active-site Proton acceptor is Glu-196. 2 cysteine pairs are disulfide-bonded: Cys-297/Cys-327 and Cys-387/Cys-401.

This sequence belongs to the GDA1/CD39 NTPase family. It depends on Mg(2+) as a cofactor. Ca(2+) serves as cofactor. In terms of processing, N-glycosylated.

It localises to the golgi apparatus membrane. It is found in the secreted. The protein localises to the cell membrane. It catalyses the reaction a ribonucleoside 5'-diphosphate + H2O = a ribonucleoside 5'-phosphate + phosphate + H(+). The enzyme catalyses IDP + H2O = IMP + phosphate + H(+). The catalysed reaction is GDP + H2O = GMP + phosphate + H(+). It carries out the reaction UDP + H2O = UMP + phosphate + H(+). Catalyzes the hydrolysis of nucleoside triphosphates and diphosphates in a calcium- or magnesium-dependent manner. Has a strong preference for nucleoside diphosphates, preferentially hydrolyzes GDP, IDP, and UDP, with slower hydrolysis of CDP, ITP, GTP, CTP, ADP, and UTP and virtually no hydrolysis of ATP. The membrane bound form might support glycosylation reactions in the Golgi apparatus and, when released from cells, might catalyze the hydrolysis of extracellular nucleotides. The sequence is that of Ectonucleoside triphosphate diphosphohydrolase 6 from Mus musculus (Mouse).